We begin with the raw amino-acid sequence, 405 residues long: NADH-quinone oxidoreductase subunit D (405 aa).

It belongs to the complex I 49 kDa subunit family. As to quaternary structure, NDH-1 is composed of 14 different subunits. Subunits NuoB, C, D, E, F, and G constitute the peripheral sector of the complex.

Its subcellular location is the cell inner membrane. The enzyme catalyses a quinone + NADH + 5 H(+)(in) = a quinol + NAD(+) + 4 H(+)(out). NDH-1 shuttles electrons from NADH, via FMN and iron-sulfur (Fe-S) centers, to quinones in the respiratory chain. The immediate electron acceptor for the enzyme in this species is believed to be ubiquinone. Couples the redox reaction to proton translocation (for every two electrons transferred, four hydrogen ions are translocated across the cytoplasmic membrane), and thus conserves the redox energy in a proton gradient. The protein is NADH-quinone oxidoreductase subunit D of Leptospira interrogans serogroup Icterohaemorrhagiae serovar copenhageni (strain Fiocruz L1-130).